We begin with the raw amino-acid sequence, 421 residues long: Serine hydroxymethyltransferase (421 aa).

Residues Leu-123 and Gly-127–Leu-129 contribute to the (6S)-5,6,7,8-tetrahydrofolate site. Residue Lys-232 is modified to N6-(pyridoxal phosphate)lysine.

This sequence belongs to the SHMT family. As to quaternary structure, homodimer. Pyridoxal 5'-phosphate is required as a cofactor.

Its subcellular location is the cytoplasm. The catalysed reaction is (6R)-5,10-methylene-5,6,7,8-tetrahydrofolate + glycine + H2O = (6S)-5,6,7,8-tetrahydrofolate + L-serine. The protein operates within one-carbon metabolism; tetrahydrofolate interconversion. It participates in amino-acid biosynthesis; glycine biosynthesis; glycine from L-serine: step 1/1. In terms of biological role, catalyzes the reversible interconversion of serine and glycine with tetrahydrofolate (THF) serving as the one-carbon carrier. This reaction serves as the major source of one-carbon groups required for the biosynthesis of purines, thymidylate, methionine, and other important biomolecules. Also exhibits THF-independent aldolase activity toward beta-hydroxyamino acids, producing glycine and aldehydes, via a retro-aldol mechanism. In Ehrlichia ruminantium (strain Gardel), this protein is Serine hydroxymethyltransferase.